The following is a 363-amino-acid chain: Trichocyst matrix protein T4-A (363 aa).

The N-terminal stretch at 1-17 (MARSLTILAIVFAVATA) is a signal peptide. Positions 18-52 (RVTKSESPKEILAQVNKDSFGNSILSVLQLQLATG) are excised as a propeptide. A coiled-coil region spans residues 85–119 (VAFEKIIADLEQEIAYHQTQIVALSNLRDSTTEAL). Residues 190–221 (RFEKVQAKLMESKHALFKPLINALTQLASKVD) constitute a propeptide that is removed on maturation. The stretch at 244-352 (ASLLATEERQ…EVLTQKLSAA (109 aa)) forms a coiled coil.

It belongs to the TMP family. Post-translationally, two components are produced by post-translational processing from the precursor peptide.

It localises to the trichocyst. Its function is as follows. Structural protein that crystallize inside the trichocyst matrix. The sequence is that of Trichocyst matrix protein T4-A (T4A) from Paramecium tetraurelia.